Consider the following 742-residue polypeptide: Envelope glycoprotein H (742 aa).

An N-terminal signal peptide occupies residues 1–23; the sequence is MRPGLPSYLIILAVCLFSHLLSS. Over 24–719 the chain is Virion surface; sequence RYGAEAVSEP…VVDATDSRLL (696 aa). Residues Asn-55, Asn-62, Asn-67, and Asn-192 are each glycosylated (N-linked (GlcNAc...) asparagine; by host). A disulfide bond links Cys-195 and Cys-211. The interaction with gL stretch occupies residues 217–280; that stretch reads YLIDELRYVK…QTEKHELLVL (64 aa). Disulfide bonds link Cys-330–Cys-383, Cys-495–Cys-522, and Cys-571–Cys-624. N-linked (GlcNAc...) asparagine; by host glycosylation is found at Asn-641 and Asn-700. The helical transmembrane segment at 720–740 threads the bilayer; sequence MMSVYALSAIIGIYLLYRMLK. The Intravirion portion of the chain corresponds to 741–742; that stretch reads TC.

The protein belongs to the herpesviridae glycoprotein H family. Interacts with glycoprotein L (gL); this interaction is necessary for the correct processing and cell surface expression of gH. The heterodimer gH/gL seems to interact with gB trimers during fusion. Forms the envelope pentamer complex (PC) composed of gH, gL, UL128, UL130, and UL131A. The pentamer interacts with host NRP2. Forms the envelope trimer complex composed of gH, gL, and gO. The trimer interacts with host PDGFRA. The trimer also interacts with host EPHA2. The trimer also interacts with host TGFBR3. Interacts with UL116. Post-translationally, N-glycosylated, O-glycosylated, and sialylated.

The protein resides in the virion membrane. Its subcellular location is the host cell membrane. The protein localises to the host endosome membrane. The heterodimer glycoprotein H-glycoprotein L is required for the fusion of viral and plasma membranes leading to virus entry into the host cell. Following initial binding to host receptor, membrane fusion is mediated by the fusion machinery composed of gB and the heterodimer gH/gL. May also be involved in the fusion between the virion envelope and the outer nuclear membrane during virion morphogenesis. In human cytomegalovirus, forms two distincts complexes to mediate viral entry, a trimer and a pentamer at the surface of the virion envelope. The gH-gL-gO trimer is required for infection in fibroblasts by interacting with host PDGFRA, and in glioblastoma cells by interacting with host EPHA2. Thsi trimer may also be required in other cell types using host TGFBR3. The gH-gL-UL128-UL130-UL131A pentamer is essential for viral entry in epithelial, endothelial and myeloid cells via interaction with host NRP2. This Human cytomegalovirus (strain Merlin) (HHV-5) protein is Envelope glycoprotein H.